Consider the following 1079-residue polypeptide: Electrogenic sodium bicarbonate cotransporter 1 (1079 aa).

Residues 1 to 62 are required for interaction with AHCYL1; sequence MEDEAALDRG…EKKEKERVSE (62 aa). The Cytoplasmic segment spans residues 1-466; it reads MEDEAALDRG…FASDFYDALN (466 aa). Tyrosine 30 carries the phosphotyrosine modification. Positions 39–52 are enriched in basic residues; the sequence is YRRRRRHKRKAGHR. Residues 39–78 form a disordered region; sequence YRRRRRHKRKAGHREKKEKERVSENYSDKSDVENADESSS. A compositionally biased stretch (basic and acidic residues) spans 53–70; that stretch reads EKKEKERVSENYSDKSDV. Phosphoserine is present on residues serine 61, serine 65, serine 68, serine 223, serine 232, serine 233, and serine 245. The tract at residues 238-265 is disordered; it reads FTSPENGSPAMTHRNLTSSSLNDISDKP. Phosphothreonine is present on residues threonine 249 and threonine 254. The span at 251–260 shows a compositional bias: polar residues; the sequence is RNLTSSSLND. Residues serine 256, serine 257, and serine 262 each carry the phosphoserine modification. The helical transmembrane segment at 467 to 491 threads the bilayer; the sequence is IQALSAILFIYLATVTNAITFGGLL. At 492–501 the chain is on the extracellular side; the sequence is GDATDNMQGV. A helical transmembrane segment spans residues 502–520; it reads LESFLGTAVSGAVFCLFAG. A topological domain (cytoplasmic) is located at residue glutamine 521. A discontinuously helical transmembrane segment spans residues 522-542; that stretch reads PLTILSSTGPVLVFERLLFNF. At 543–550 the chain is on the extracellular side; it reads SKDHNFDY. Residues 551–571 traverse the membrane as a helical segment; it reads LEFRLWIGLWSAFLCLILVAT. Over 572–585 the chain is Cytoplasmic; sequence DASFLVQYFTRFTE. Residues 586 to 609 form a helical membrane-spanning segment; sequence EGFSSLISFIFIYDAFKKMIKLAD. At 610–692 the chain is on the extracellular side; that stretch reads YYPINSNFKV…GNNCDFVPDI (83 aa). Residues 693–710 traverse the membrane as a helical segment; it reads TLMSFILFLGTYTSSMAL. Residues 711–725 lie on the Cytoplasmic side of the membrane; that stretch reads KKFKTSRYFPTTARK. Residues 726–745 traverse the membrane as a helical segment; it reads LISDFAIILSILIFCVIDAL. Residues 746–779 are Extracellular-facing; it reads VGVDTPKLIVPSEFKPTSPNRGWFVPPFGGNPWW. Residues 748–779 are interaction with CA4; sequence VDTPKLIVPSEFKPTSPNRGWFVPPFGGNPWW. A helical transmembrane segment spans residues 780 to 807; the sequence is VYLAAAIPALLVTILIFMDQQITAVIVN. The Cytoplasmic portion of the chain corresponds to 808–819; sequence RKEHKLKKGAGY. Residues 820–836 traverse the membrane as a helical segment; that stretch reads HLDLFWVAILMVVCSFM. A topological domain (extracellular) is located at residue alanine 837. Residues 838–855 traverse the membrane as a discontinuously helical segment; sequence LPWYVAATVISIAHIDSL. Residues 856–877 are Cytoplasmic-facing; sequence KMETETSAPGEQPKFLGVREQR. The helical transmembrane segment at 878–894 threads the bilayer; it reads VTGTLVFILTGLSVFMA. At 895 to 901 the chain is on the extracellular side; that stretch reads PILKFIP. The chain crosses the membrane as a helical span at residues 902–918; the sequence is MPVLYGVFLYMGVASLN. Residues 919 to 960 lie on the Cytoplasmic side of the membrane; that stretch reads GVQFMDRLKLLLMPLKHQPDFIYLRHVPLRRVHLFTFLQVLC. An intramembrane region (discontinuously helical) is located at residues 961-986; it reads LALLWILKSTVAAIIFPVMILALVAV. At 987 to 1079 the chain is on the cytoplasmic side; the sequence is RKGMDYLFSQ…PTFLERHTSC (93 aa). Residues 1002-1004 form a CA2-binding region; sequence LDD. The interval 1012–1079 is disordered; it reads KKKEDEKKKK…PTFLERHTSC (68 aa). Serine 1026 is modified (phosphoserine; by PKA). Serine 1029 is subject to Phosphoserine. A CA2-binding region spans residues 1030-1033; the sequence is DSDD. Residues serine 1034 and serine 1044 each carry the phosphoserine modification. The interval 1057–1059 is required for basolateral targeting; it reads FLS. The segment covering 1062-1079 has biased composition (basic and acidic residues); it reads KPSDRERSPTFLERHTSC. Serine 1069 is modified (phosphoserine).

Belongs to the anion exchanger (TC 2.A.31) family. Homodimer. Interacts with CA2/carbonic anhydrase 2 and CA4/carbonic anhydrase 4 which may regulate transporter activity. Isoform 1 but not isoform 2 interacts with AHCYL1 (via PEST domain when phosphorylated); the interaction increases SLC4A4 isoform 1 activity. Interacts with AHCYL2. In terms of processing, phosphorylation of Ser-1026 by PKA increases the binding of CA2 and changes the Na(+):HCO3(-) stoichiometry of the transporter from 3:1 to 2:1. Phosphorylated in presence of STK39 and dephosphorylated in presence of PP1 phosphatase; phosphorylation seems to inhibit SLC4A4 activity. Post-translationally, N-glycosylated. May not be necessary for the transporter basic functions. Expressed in vas deferens epithelia (at protein level).

Its subcellular location is the basolateral cell membrane. The protein localises to the cell membrane. The catalysed reaction is 2 hydrogencarbonate(out) + Na(+)(out) = 2 hydrogencarbonate(in) + Na(+)(in). It carries out the reaction 3 hydrogencarbonate(out) + Na(+)(out) = 3 hydrogencarbonate(in) + Na(+)(in). Functionally, electrogenic sodium/bicarbonate cotransporter with a Na(+):HCO3(-) stoichiometry varying from 1:2 to 1:3. May regulate bicarbonate influx/efflux at the basolateral membrane of cells and regulate intracellular pH. This Sus scrofa (Pig) protein is Electrogenic sodium bicarbonate cotransporter 1 (SLC4A4).